We begin with the raw amino-acid sequence, 249 residues long: MLKPLTNQGFTNKVFYDDETNRFIKIKSYDGFNHKSDAFLLNNLDFCPKIFVDNKKELQTEWINGITLNESLLTDDILKTIGKNLITLHNSKLKFYKENQIARRFNIYRKKISSLNRKIPILDKYYKKINLFLRNIDNSAPVHNDLWLFNMIKVNDKIYFTDWEYATMGDVHFDLAYFIESSNLNEKQEKVFLDAYGDDFEPKYLFIHKILVNALIVLWINAHEVLPFDDSLYLNRVEKYMEQLEKEKE.

It belongs to the peptidase S49 family.

The protein is Protein LicA homolog (licA) of Metamycoplasma hominis (strain ATCC 23114 / DSM 25592 / NBRC 14850 / NCTC 10111 / PG21) (Mycoplasma hominis).